Consider the following 42-residue polypeptide: Large ribosomal subunit protein bL36 (42 aa).

The protein belongs to the bacterial ribosomal protein bL36 family.

In Ehrlichia ruminantium (strain Gardel), this protein is Large ribosomal subunit protein bL36.